The sequence spans 667 residues: DNA ligase (667 aa).

NAD(+)-binding positions include 32–36 (DKDYD) and 80–81 (SL). Lysine 121 (N6-AMP-lysine intermediate) is an active-site residue. NAD(+)-binding residues include arginine 143, glutamate 178, and lysine 314. Cysteine 407, cysteine 410, cysteine 423, and cysteine 429 together coordinate Zn(2+). The region spanning 587–667 (IVESIFKDKT…EFEKMLGRES (81 aa)) is the BRCT domain.

This sequence belongs to the NAD-dependent DNA ligase family. LigA subfamily. It depends on Mg(2+) as a cofactor. Requires Mn(2+) as cofactor.

It carries out the reaction NAD(+) + (deoxyribonucleotide)n-3'-hydroxyl + 5'-phospho-(deoxyribonucleotide)m = (deoxyribonucleotide)n+m + AMP + beta-nicotinamide D-nucleotide.. In terms of biological role, DNA ligase that catalyzes the formation of phosphodiester linkages between 5'-phosphoryl and 3'-hydroxyl groups in double-stranded DNA using NAD as a coenzyme and as the energy source for the reaction. It is essential for DNA replication and repair of damaged DNA. The sequence is that of DNA ligase from Clostridium botulinum (strain Alaska E43 / Type E3).